The primary structure comprises 200 residues: FMN-dependent NADH:quinone oxidoreductase (200 aa).

Residues S10, 96–99 (MYNF), and 140–143 (SRGG) each bind FMN.

This sequence belongs to the azoreductase type 1 family. Homodimer. Requires FMN as cofactor.

The enzyme catalyses 2 a quinone + NADH + H(+) = 2 a 1,4-benzosemiquinone + NAD(+). The catalysed reaction is N,N-dimethyl-1,4-phenylenediamine + anthranilate + 2 NAD(+) = 2-(4-dimethylaminophenyl)diazenylbenzoate + 2 NADH + 2 H(+). Functionally, quinone reductase that provides resistance to thiol-specific stress caused by electrophilic quinones. Also exhibits azoreductase activity. Catalyzes the reductive cleavage of the azo bond in aromatic azo compounds to the corresponding amines. The chain is FMN-dependent NADH:quinone oxidoreductase from Photorhabdus laumondii subsp. laumondii (strain DSM 15139 / CIP 105565 / TT01) (Photorhabdus luminescens subsp. laumondii).